The chain runs to 664 residues: MMTEKSNGVKSSPANNHNHHPPPSIKANGKDDHRAGSRPQSVAADDDTSPELQRLAEMDTPRRGRGGFQRIVRLVGVIRDWANKNFREEEPRPDSFLERFRGPELQTVTTHQGDDKGGKDGEGKGTKKKFELFVLDPAGDWYYRWLFVIAMPVLYNWCLLVARACFSDLQRNYFVVWLVLDYFSDTVYIADLIIRLRTGFLEQGLLVKDPKKLRDNYIHTLQFKLDVASIIPTDLIYFAVGIHSPEVRFNRLLHFARMFEFFDRTETRTSYPNIFRISNLVLYILVIIHWNACIYYVISKSIGFGVDTWVYPNITDPEYGYLAREYIYCLYWSTLTLTTIGETPPPVKDEEYLFVIFDFLIGVLIFATIVGNVGSMISNMNATRAEFQAKIDAVKHYMQFRKVSKDMEAKVIKWFDYLWTNKKTVDEREVLKNLPAKLRAEIAINVHLSTLKKVRIFQDCEAGLLVELVLKLRPQVFSPGDYICRKGDIGKEMYIIKEGKLAVVADDGVTQYALLSAGSCFGEISILNIKGSKMGNRRTANIRSLGYSDLFCLSKDDLMEAVTEYPDAKKVLEERGREILMKEGLLDENEVAASMEVDVQEKLEQLETNMDTLYTRFARLLAEYTGAQQKLKQRITVLETKMKQNHEDDYLSDGINTPEPTAAE.

Residues 1–10 are compositionally biased toward polar residues; that stretch reads MMTEKSNGVK. The disordered stretch occupies residues 1-51; it reads MMTEKSNGVKSSPANNHNHHPPPSIKANGKDDHRAGSRPQSVAADDDTSPE. Residues 1–146 lie on the Cytoplasmic side of the membrane; that stretch reads MMTEKSNGVK…PAGDWYYRWL (146 aa). Residues 147–168 traverse the membrane as a helical segment; sequence FVIAMPVLYNWCLLVARACFSD. Residues 169 to 178 lie on the Extracellular side of the membrane; the sequence is LQRNYFVVWL. A helical transmembrane segment spans residues 179-199; sequence VLDYFSDTVYIADLIIRLRTG. Residues 200–224 lie on the Cytoplasmic side of the membrane; that stretch reads FLEQGLLVKDPKKLRDNYIHTLQFK. Residues 225–243 form a helical membrane-spanning segment; it reads LDVASIIPTDLIYFAVGIH. Topologically, residues 244-248 are extracellular; it reads SPEVR. The helical transmembrane segment at 249 to 267 threads the bilayer; it reads FNRLLHFARMFEFFDRTET. At 268 to 274 the chain is on the cytoplasmic side; that stretch reads RTSYPNI. The interval 272-380 is ion conduction pathway; the sequence is PNIFRISNLV…GNVGSMISNM (109 aa). Residues 275 to 298 traverse the membrane as a helical segment; sequence FRISNLVLYILVIIHWNACIYYVI. Residues 299 to 321 are Extracellular-facing; that stretch reads SKSIGFGVDTWVYPNITDPEYGY. The next 2 membrane-spanning stretches (helical) occupy residues 322-356 and 357-381; these read LARE…LFVI and FDFL…SNMN. Residues 339–342 form a selectivity filter region; sequence TIGE. The C-linker stretch occupies residues 382 to 458; that stretch reads ATRAEFQAKI…STLKKVRIFQ (77 aa). Over 382-664 the chain is Cytoplasmic; the sequence is ATRAEFQAKI…INTPEPTAAE (283 aa). The interval 462 to 582 is cyclic nucleotide-binding domain; that stretch reads AGLLVELVLK…EERGREILMK (121 aa). 4 residues coordinate 3',5'-cyclic GMP: G522, S525, R538, and T539. 3',5'-cyclic AMP-binding residues include R538 and T539. The stretch at 599 to 653 forms a coiled coil; sequence VQEKLEQLETNMDTLYTRFARLLAEYTGAQQKLKQRITVLETKMKQNHEDDYLSD.

Belongs to the cyclic nucleotide-gated cation channel (TC 1.A.1.5) family. CNGA2 subfamily. The olfactory cyclic nucleotide-gated channel is an heterotetramer composed of CNGA2, CNGA4 and CNGB1b subunits with 2:1:1 stoichiometry. Olfactory neurons. Widely expressed in brain, enriched in deep cerebellar nuclei, olfactory bulb mitral cells and cerebellar Purkinje neurons. Expressed in olfactory sensory cilia (at protein level).

Its subcellular location is the cell projection. It is found in the cilium membrane. It catalyses the reaction Ca(2+)(in) = Ca(2+)(out). It carries out the reaction Na(+)(in) = Na(+)(out). The catalysed reaction is K(+)(in) = K(+)(out). The enzyme catalyses NH4(+)(in) = NH4(+)(out). It catalyses the reaction Rb(+)(in) = Rb(+)(out). It carries out the reaction Li(+)(in) = Li(+)(out). The catalysed reaction is Cs(+)(in) = Cs(+)(out). Its activity is regulated as follows. The channel activity is inhibited by L-cis diltiazem. Its function is as follows. Pore-forming subunit of the olfactory cyclic nucleotide-gated channel. Operates in the cilia of olfactory sensory neurons where chemical stimulation of the odorant is converted to an electrical signal. Mediates odorant-induced cAMP-dependent Ca(2+) influx triggering neuron depolarization. The rise of intracellular Ca(2+) levels potentiates the olfactory response by activating Ca(2+)-dependent Cl(-) channels, but it also serves as a negative feedback signal to desensitize the channel for rapid adaptation to odorants. Conducts cAMP- and cGMP-gated ion currents, with permeability for monovalent and divalent cations. This is Cyclic nucleotide-gated channel alpha-2 from Rattus norvegicus (Rat).